The chain runs to 3933 residues: Protein DOP1 homolog PFC0245c (3933 aa).

The next 4 helical transmembrane spans lie at 70 to 90, 98 to 118, 140 to 160, and 163 to 183; these read LNPL…SSIF, FINN…HCTI, IFAY…NNIL, and IYSI…WLLL. 3 disordered regions span residues 468 to 494, 543 to 600, and 614 to 656; these read RLNN…KYQG, ININ…NMLH, and KKIN…SSSS. Residues 470–486 are compositionally biased toward low complexity; that stretch reads NNNNNNNNNNNNNNNNN. Positions 546–561 are enriched in acidic residues; that stretch reads NDDDNLNYDDNEDDEY. Composition is skewed to low complexity over residues 563-576 and 585-597; these read NYHN…NYFN and ENNN…NNNN. A coiled-coil region spans residues 620 to 651; sequence GQTNNYDDDEEEEDEEEEDNNNNTSYNNNNNN. Acidic residues predominate over residues 625-639; the sequence is YDDDEEEEDEEEEDN. A compositionally biased stretch (low complexity) spans 640-656; that stretch reads NNNTSYNNNNNNSSSSS. 3 consecutive transmembrane segments (helical) span residues 782–802, 842–862, and 1186–1206; these read MLNL…YTFY, YLYI…MNFL, and FYFW…KSLL. Residues 1216–1255 are compositionally biased toward acidic residues; that stretch reads DDTDDDDDDDDDDDDEEEDDDDEDDDDEDDEEEDDEEDLG. Disordered stretches follow at residues 1216–1284 and 1361–1405; these read DDTD…MNKK and TNNN…NNFN. Over residues 1263–1284 the composition is skewed to basic residues; sequence SSKKGKKKKKKSVHKNKLMNKK. A coiled-coil region spans residues 1349–1403; that stretch reads ELNKMKYMNEDITNNNNNINNNSNNNNNNKNNINNNNNNNNNNNNNNNNLNNLNN. Residues 1362–1405 show a composition bias toward low complexity; it reads NNNNNINNNSNNNNNNKNNINNNNNNNNNNNNNNNNLNNLNNFN. 2 consecutive transmembrane segments (helical) span residues 1462 to 1482 and 1997 to 2017; these read FIKL…MFCL and KNIF…KLIY. Residues 2691 to 2739 form a disordered region; the sequence is HRRKMNRQNIRTDSSNNNNNNNINSNNNNNNNNNNNNNNNNNNNNNIYN. The span at 2704 to 2739 shows a compositional bias: low complexity; the sequence is SSNNNNNNNINSNNNNNNNNNNNNNNNNNNNNNIYN. The next 5 helical transmembrane spans lie at 2860–2880, 2905–2925, 3017–3037, 3200–3220, and 3276–3296; these read INLN…CTLT, IMSS…HIYV, YSEI…YHTV, ILIL…YIII, and IIIN…SWIF. Positions 3620 to 3646 are disordered; sequence LKNEKSTRTYNSSLQEGSDYDEEEDEE. Acidic residues predominate over residues 3637–3646; sequence SDYDEEEDEE. Residues 3897–3925 are a coiled coil; sequence KEETIILLKELNSVENDINDLFLEVDLNE.

It belongs to the DOP1 family.

The protein resides in the membrane. In terms of biological role, may be involved in protein traffic between late Golgi and early endosomes. This chain is Protein DOP1 homolog PFC0245c, found in Plasmodium falciparum (isolate 3D7).